Consider the following 553-residue polypeptide: Putative transport protein YidE (553 aa).

The next 5 membrane-spanning stretches (helical) occupy residues 4–24, 28–48, 65–85, 95–115, and 158–178; these read IALT…IGNV, GVGL…HFVS, FGLI…FFAS, LFAV…HKLF, and MSYA…MWML. RCK C-terminal domains follow at residues 191 to 276 and 279 to 361; these read QQHE…VIGQ and DTSL…VLGN. A run of 6 helical transmembrane segments spans residues 371 to 391, 393 to 413, 439 to 459, 464 to 484, 493 to 513, and 533 to 553; these read MLPV…PVFV, GFPA…ALIL, IVLF…HTLV, LSWI…VGIL, YLTM…LAFA, and LVMF…WSIG.

It belongs to the AAE transporter (TC 2.A.81) family. YidE subfamily.

Its subcellular location is the cell membrane. This is Putative transport protein YidE from Escherichia coli O6:H1 (strain CFT073 / ATCC 700928 / UPEC).